The sequence spans 436 residues: Trigger factor (436 aa).

A PPIase FKBP-type domain is found at 161 to 246 (GMRVTMDFVG…LNKVEEQILP (86 aa)).

It belongs to the FKBP-type PPIase family. Tig subfamily.

It is found in the cytoplasm. The catalysed reaction is [protein]-peptidylproline (omega=180) = [protein]-peptidylproline (omega=0). Functionally, involved in protein export. Acts as a chaperone by maintaining the newly synthesized protein in an open conformation. Functions as a peptidyl-prolyl cis-trans isomerase. The polypeptide is Trigger factor (Aeromonas hydrophila subsp. hydrophila (strain ATCC 7966 / DSM 30187 / BCRC 13018 / CCUG 14551 / JCM 1027 / KCTC 2358 / NCIMB 9240 / NCTC 8049)).